The chain runs to 75 residues: Putative antitoxin VapB12 (75 aa).

Putative antitoxin component of a possible type II toxin-antitoxin (TA) system. The cognate toxin is VapC12. The protein is Putative antitoxin VapB12 (vapB12) of Mycobacterium tuberculosis (strain CDC 1551 / Oshkosh).